A 493-amino-acid chain; its full sequence is MQASQLINSLKFKQVQPALTTDFDVTMLTQDTREVQPGAMFIAVVGYHVDGHDLVDQAIEKGAKIIVASKPLDVNVPVIYVENTERAMAILADVFYGAPSQKMRMIGVTGTNGKTTVTHLIEQIYRDQQQATGLIGTMYRKIKDEKLPTANTTPDAITTQRTLAAMRDAGVETVAMEVSSIALVLGRVWGIDYDIAVFTNLTQDHLDFHKTMAKYTEAKAMLFAQLGNKYSADGTNKVAVLNTDDPVGREFEQYTAAHVLTFGLKPDAMINAQNVEIKSHGTEFDLSVFGHVTHVTMQLIGQFNVYNMLAAFAAAYASGIPEDQIIKSLEKVTGVKGRFQSVPSHTGVSVIVDYSHTPDGLLNALETIQDFATKDIYCVVGCGGDRDKTKRPKMAKIAVEHSTKPIFTSDNPRTEDPTMILNDMVAGVPNADVPVYEDRHVAIAKAIEAAQPGDVVLIAGKGHEDYQIIGRTKHHFDDSEEAAKALALKPTID.

Thr32 is a binding site for UDP-N-acetyl-alpha-D-muramoyl-L-alanyl-D-glutamate. An ATP-binding site is contributed by 110–116 (GTNGKTT). Residues Asn151, 152 to 153 (TT), Ser179, and Arg187 each bind UDP-N-acetyl-alpha-D-muramoyl-L-alanyl-D-glutamate. Lys219 bears the N6-carboxylysine mark. Meso-2,6-diaminopimelate is bound by residues Arg386, 410-413 (DNPR), Gly460, and Glu464. The Meso-diaminopimelate recognition motif signature appears at 410–413 (DNPR).

The protein belongs to the MurCDEF family. MurE subfamily. Mg(2+) serves as cofactor. In terms of processing, carboxylation is probably crucial for Mg(2+) binding and, consequently, for the gamma-phosphate positioning of ATP.

The protein resides in the cytoplasm. It catalyses the reaction UDP-N-acetyl-alpha-D-muramoyl-L-alanyl-D-glutamate + meso-2,6-diaminopimelate + ATP = UDP-N-acetyl-alpha-D-muramoyl-L-alanyl-gamma-D-glutamyl-meso-2,6-diaminopimelate + ADP + phosphate + H(+). The protein operates within cell wall biogenesis; peptidoglycan biosynthesis. Functionally, catalyzes the addition of meso-diaminopimelic acid to the nucleotide precursor UDP-N-acetylmuramoyl-L-alanyl-D-glutamate (UMAG) in the biosynthesis of bacterial cell-wall peptidoglycan. The polypeptide is UDP-N-acetylmuramoyl-L-alanyl-D-glutamate--2,6-diaminopimelate ligase (Lactiplantibacillus plantarum (strain ATCC BAA-793 / NCIMB 8826 / WCFS1) (Lactobacillus plantarum)).